The following is a 454-amino-acid chain: Rhizobactin siderophore biosynthesis protein RhbE (454 aa).

An FAD-binding site is contributed by 7-13 (AGIGIGP).

Belongs to the lysine N(6)-hydroxylase/L-ornithine N(5)-oxygenase family. FAD is required as a cofactor.

It functions in the pathway siderophore biosynthesis; rhizobactin biosynthesis. This chain is Rhizobactin siderophore biosynthesis protein RhbE (rhbE), found in Rhizobium meliloti (strain 1021) (Ensifer meliloti).